Here is a 257-residue protein sequence, read N- to C-terminus: Ribosomal RNA small subunit methyltransferase J (257 aa).

Residues 107–108 (RD), 123–124 (ER), and aspartate 177 contribute to the S-adenosyl-L-methionine site.

The protein belongs to the methyltransferase superfamily. RsmJ family.

The protein localises to the cytoplasm. The enzyme catalyses guanosine(1516) in 16S rRNA + S-adenosyl-L-methionine = N(2)-methylguanosine(1516) in 16S rRNA + S-adenosyl-L-homocysteine + H(+). Functionally, specifically methylates the guanosine in position 1516 of 16S rRNA. The sequence is that of Ribosomal RNA small subunit methyltransferase J from Haemophilus influenzae (strain 86-028NP).